A 1492-amino-acid chain; its full sequence is Collagen alpha-1(II) chain (1492 aa).

An N-terminal signal peptide occupies residues Met1–Cys26. Positions Gln27 to Ala186 are cleaved as a propeptide — N-terminal propeptide. The region spanning Gly36 to Pro94 is the VWFC domain. Residues Ser98–Gln1255 form a disordered region. Basic and acidic residues-rich tracts occupy residues Gln110–Val121 and Pro138–Glu159. Pro residues predominate over residues Pro163–Pro178. Low complexity predominate over residues Gly197 to Met208. Residues Gly206–Pro1219 are triple-helical region. The segment covering Pro213–Ala222 has biased composition (pro residues). Low complexity predominate over residues Pro223–Glu234. Residues Gly236–Gly245 show a composition bias toward gly residues. Over residues Pro256 to Glu270 the composition is skewed to basic and acidic residues. Gly residues predominate over residues Gly311–Gly320. Low complexity-rich tracts occupy residues Glu321 to Leu333, Pro340 to Pro355, Pro366 to Pro376, and Pro396 to Pro436. Over residues Phe438–Pro447 the composition is skewed to pro residues. Low complexity-rich tracts occupy residues Ser480–Ala490 and Glu501–Pro517. The span at Gly539–Gly548 shows a compositional bias: gly residues. Composition is skewed to low complexity over residues Leu627–Leu636 and Ala645–Ala655. 4-hydroxyproline occurs at positions 664 and 673. 3-hydroxyproline is present on Pro675. 2 positions are modified to 4-hydroxyproline: Pro676 and Pro679. A compositionally biased stretch (low complexity) spans Glu711–Pro741. Positions Lys769–Pro780 are enriched in basic and acidic residues. Composition is skewed to low complexity over residues Ala838–Ala850 and Ala894–Val910. The residue at position 912 (Pro912) is a 3-hydroxyproline. Residues Pro913, Pro919, and Pro925 each carry the 4-hydroxyproline modification. The span at Pro919–Lys930 shows a compositional bias: low complexity. The segment covering Gly1010–Gly1019 has biased composition (gly residues). Positions Ser1105–Pro1114 are enriched in low complexity. Over residues Arg1120 to Gln1134 the composition is skewed to basic and acidic residues. 2 stretches are compositionally biased toward low complexity: residues Phe1140–Ser1159 and Pro1176–Pro1186. 3-hydroxyproline is present on Pro1149. A 4-hydroxyproline modification is found at Pro1186. Residue Pro1191 is modified to 3-hydroxyproline. 4-hydroxyproline is present on Pro1192. The span at Ala1204–Pro1221 shows a compositional bias: pro residues. The residue at position 1206 (Pro1206) is a 3-hydroxyproline. 4-hydroxyproline is present on residues Pro1207 and Pro1210. The residue at position 1212 (Pro1212) is a 3-hydroxyproline. A 4-hydroxyproline mark is found at Pro1213 and Pro1216. At Pro1218 the chain carries 3-hydroxyproline. Pro1219 is subject to 4-hydroxyproline. Residues Gly1220–Ala1246 form a nonhelical region (C-terminal) region. Residues Lys1236–Arg1245 are compositionally biased toward basic and acidic residues. The propeptide at Asp1247–Leu1492 is C-terminal propeptide. The Fibrillar collagen NC1 domain occupies Val1258–Leu1492. Intrachain disulfides connect Cys1288/Cys1320, Cys1328/Cys1490, and Cys1398/Cys1443. Positions 1306, 1308, 1309, 1311, and 1314 each coordinate Ca(2+). The N-linked (GlcNAc...) asparagine glycan is linked to Asn1393.

Belongs to the fibrillar collagen family. In terms of assembly, homotrimers of alpha 1(II) chains. Post-translationally, contains mostly 4-hydroxyproline. Prolines at the third position of the tripeptide repeating unit (G-X-P) are 4-hydroxylated in some or all of the chains. Contains 3-hydroxyproline at a few sites. This modification occurs on the first proline residue in the sequence motif Gly-Pro-Hyp, where Hyp is 4-hydroxyproline. In terms of processing, lysine residues at the third position of the tripeptide repeating unit (G-X-Y) are 5-hydroxylated in some or all of the chains. Post-translationally, O-glycosylated on hydroxylated lysine residues. The O-linked glycan consists of a Glc-Gal disaccharide.

The protein localises to the secreted. Its subcellular location is the extracellular space. The protein resides in the extracellular matrix. Functionally, type II collagen is specific for cartilaginous tissues. It is essential for the normal embryonic development of the skeleton, for linear growth and for the ability of cartilage to resist compressive forces. The protein is Collagen alpha-1(II) chain of Xenopus tropicalis (Western clawed frog).